A 74-amino-acid chain; its full sequence is Progonadoliberin-3 (74 aa).

Residues 1 to 15 (VRVVVLALVAQVTLS) form the signal peptide. Position 16 is a pyrrolidone carboxylic acid (glutamine 16). The residue at position 25 (glycine 25) is a Glycine amide.

Belongs to the GnRH family.

It is found in the secreted. Stimulates the secretion of gonadotropins. In Oncorhynchus tshawytscha (Chinook salmon), this protein is Progonadoliberin-3 (gnrh3).